The sequence spans 295 residues: 33 kDa chaperonin (295 aa).

2 disulfide bridges follow: cysteine 236-cysteine 238 and cysteine 269-cysteine 272.

It belongs to the HSP33 family. Post-translationally, under oxidizing conditions two disulfide bonds are formed involving the reactive cysteines. Under reducing conditions zinc is bound to the reactive cysteines and the protein is inactive.

The protein resides in the cytoplasm. In terms of biological role, redox regulated molecular chaperone. Protects both thermally unfolding and oxidatively damaged proteins from irreversible aggregation. Plays an important role in the bacterial defense system toward oxidative stress. The polypeptide is 33 kDa chaperonin (Citrifermentans bemidjiense (strain ATCC BAA-1014 / DSM 16622 / JCM 12645 / Bem) (Geobacter bemidjiensis)).